The following is a 59-amino-acid chain: Putative conotoxin (59 aa).

The N-terminal stretch at 1–25 (MGMRMMFTVFLLVVLATTVVPITLA) is a signal peptide. Positions 26–47 (SATDGRNAAANARVSPVISKSS) are excised as a propeptide.

Belongs to the conotoxin A superfamily. As to expression, expressed by the venom duct.

The protein localises to the secreted. Acts as a neurotoxin. The protein is Putative conotoxin of Conus imperialis (Imperial cone).